The sequence spans 247 residues: Probable transcriptional regulatory protein DvMF_3201 (247 aa).

The tract at residues 1 to 21 (MAGHSKWANIQHRKGRQDAKR) is disordered.

The protein belongs to the TACO1 family.

It localises to the cytoplasm. This chain is Probable transcriptional regulatory protein DvMF_3201, found in Nitratidesulfovibrio vulgaris (strain DSM 19637 / Miyazaki F) (Desulfovibrio vulgaris).